The chain runs to 485 residues: Sphingosine kinase 1 (485 aa).

Positions 116 to 258 (GRPKKLLVFV…LDVATISQGT (143 aa)) constitute a DAGKc domain. ATP contacts are provided by residues 126–128 (NPF) and T158. Position 183-186 (183-186 (SGDG)) interacts with substrate. D185 serves as the catalytic Proton donor/acceptor. ATP contacts are provided by residues E190 and 215–217 (GSG). D276 is a binding site for substrate. Residues R283, R289, and 446-448 (DGE) contribute to the ATP site.

Requires Mg(2+) as cofactor. Highly expressed in stems and flowers and at lower levels in roots, leaves and siliques.

The protein localises to the vacuole membrane. It carries out the reaction a sphingoid base + ATP = a sphingoid 1-phosphate + ADP + H(+). With respect to regulation, activated by phosphatidic acid (PA). Binding with PA stimulates the activity by promoting the binding of substrate to the catalytic site. Involved in the production of sphingolipid metabolites. Phosphorylates sphingosine and various sphingoid long-chain base (LCB) products, such as phytosphingosine (PHS, 4-hydroxysphinganine), 4-hydroxy-8-sphingenine, 4,8-sphingadienine, D-erythro-dihydrosphingosine and D,L-threo-dihydrosphingosine. Is required for abscisic acid (ABA) signaling that mediates stomatal closure, inhibition of seed germination and root elongation. May function upstream of PLDALPHA1 and phosphatidic acid (PA) in an amplification response to ABA that mediates stomatal closure. This chain is Sphingosine kinase 1 (SPHK1), found in Arabidopsis thaliana (Mouse-ear cress).